The following is a 201-amino-acid chain: 3-isopropylmalate dehydratase small subunit (201 aa).

Belongs to the LeuD family. LeuD type 1 subfamily. Heterodimer of LeuC and LeuD.

The enzyme catalyses (2R,3S)-3-isopropylmalate = (2S)-2-isopropylmalate. The protein operates within amino-acid biosynthesis; L-leucine biosynthesis; L-leucine from 3-methyl-2-oxobutanoate: step 2/4. Its function is as follows. Catalyzes the isomerization between 2-isopropylmalate and 3-isopropylmalate, via the formation of 2-isopropylmaleate. The sequence is that of 3-isopropylmalate dehydratase small subunit from Methylorubrum extorquens (strain ATCC 14718 / DSM 1338 / JCM 2805 / NCIMB 9133 / AM1) (Methylobacterium extorquens).